A 251-amino-acid polypeptide reads, in one-letter code: HTH-type transcriptional regulator UlaR (251 aa).

The HTH deoR-type domain maps to 3 to 58 (EAQRHQILLDMLAQLGFVTVENVIERLGISPATARRDINKLDESGKLKKVRNGAEA). The segment at residues 20–39 (VTVENVIERLGISPATARRD) is a DNA-binding region (H-T-H motif).

The protein localises to the cytoplasm. Represses ulaG and the ulaABCDEF operon. This Salmonella agona (strain SL483) protein is HTH-type transcriptional regulator UlaR.